Here is a 348-residue protein sequence, read N- to C-terminus: Small ribosomal subunit biogenesis GTPase RsgA (348 aa).

The region spanning 72–230 is the CP-type G domain; it reads RNQLSRPAIA…IADTPGFNQP (159 aa). Residues 121–124 and 172–180 each bind GTP; these read TKAD and GPSGVGKSS. The Zn(2+) site is built by C255, C260, H262, and C268. Over residues 305-322 the composition is skewed to basic and acidic residues; it reads AKSDRQGQQRLEPLLDAK. The interval 305–348 is disordered; it reads AKSDRQGQQRLEPLLDAKKYRRRSRRQQHQHVNPMAEEVLDSEW. The span at 323-333 shows a compositional bias: basic residues; the sequence is KYRRRSRRQQH.

Belongs to the TRAFAC class YlqF/YawG GTPase family. RsgA subfamily. Monomer. Associates with 30S ribosomal subunit, binds 16S rRNA. The cofactor is Zn(2+).

It is found in the cytoplasm. Its function is as follows. One of several proteins that assist in the late maturation steps of the functional core of the 30S ribosomal subunit. Helps release RbfA from mature subunits. May play a role in the assembly of ribosomal proteins into the subunit. Circularly permuted GTPase that catalyzes slow GTP hydrolysis, GTPase activity is stimulated by the 30S ribosomal subunit. The polypeptide is Small ribosomal subunit biogenesis GTPase RsgA (Thermosynechococcus vestitus (strain NIES-2133 / IAM M-273 / BP-1)).